The sequence spans 730 residues: Elongation factor 2 (730 aa).

Residues 19-228 (TKIRNIGIVA…TGVSFKDVYD (210 aa)) enclose the tr-type G domain. Residues 28–35 (AHIDHGKT), 94–98 (DTPGH), and 148–151 (NKVD) contribute to the GTP site. At His596 the chain carries Diphthamide.

Belongs to the TRAFAC class translation factor GTPase superfamily. Classic translation factor GTPase family. EF-G/EF-2 subfamily.

It is found in the cytoplasm. Its function is as follows. Catalyzes the GTP-dependent ribosomal translocation step during translation elongation. During this step, the ribosome changes from the pre-translocational (PRE) to the post-translocational (POST) state as the newly formed A-site-bound peptidyl-tRNA and P-site-bound deacylated tRNA move to the P and E sites, respectively. Catalyzes the coordinated movement of the two tRNA molecules, the mRNA and conformational changes in the ribosome. In Methanosarcina barkeri (strain Fusaro / DSM 804), this protein is Elongation factor 2.